The chain runs to 440 residues: GQCGNQIGSKFWEVVCDEHGIDPTGRYVGNSDLQLERVNVYYNEASCGRFVPRAILMDLEPGTMDSVRTGPYGQIFRPDNFVFGQSGAGNNWAKGHYTEGAELIDSVLDVVRKEAENCDCLQGFQVCHSLGGGTGSGMGTLLISKIREEYPDRMMLTFSVFPSPKVSDTVVEPYNATLSVHQLVENADECMVLDNEALYDICFRTLKLTTPSFGDLNHLISATMSGVTCCLRFPGQLNSDLRKLAVNLIPFPRLHFFMVGFAPLTSRGSQQYRALTVPELTQQMWDSKNMMCAADPRHGRYLTASAMFRGKMSTKEVDEQMINVQNKNSSYFVEWIPNNVKSSVCDIAPRGLSMASTFIGNSTSIQEMFRRVSEQFTAMFRRKAFLHWYTGEGMDEMEFTEAESNMNDLVSEYQQYQDATADEEGEYEDEEEEEPEHGYE.

GTP contacts are provided by Gln-2, Glu-60, Ser-129, Gly-133, Thr-134, Gly-135, Asn-195, and Asn-217. Glu-60 contributes to the Mg(2+) binding site. Positions 411 to 440 (SEYQQYQDATADEEGEYEDEEEEEPEHGYE) are disordered. The span at 420 to 440 (TADEEGEYEDEEEEEPEHGYE) shows a compositional bias: acidic residues.

The protein belongs to the tubulin family. Dimer of alpha and beta chains. A typical microtubule is a hollow water-filled tube with an outer diameter of 25 nm and an inner diameter of 15 nM. Alpha-beta heterodimers associate head-to-tail to form protofilaments running lengthwise along the microtubule wall with the beta-tubulin subunit facing the microtubule plus end conferring a structural polarity. Microtubules usually have 13 protofilaments but different protofilament numbers can be found in some organisms and specialized cells. Mg(2+) is required as a cofactor.

It localises to the cytoplasm. It is found in the cytoskeleton. Functionally, tubulin is the major constituent of microtubules, a cylinder consisting of laterally associated linear protofilaments composed of alpha- and beta-tubulin heterodimers. Microtubules grow by the addition of GTP-tubulin dimers to the microtubule end, where a stabilizing cap forms. Below the cap, tubulin dimers are in GDP-bound state, owing to GTPase activity of alpha-tubulin. The sequence is that of Tubulin beta-3 chain (TUBB3) from Pisum sativum (Garden pea).